The following is a 361-amino-acid chain: 3-dehydroquinate synthase (361 aa).

Residues Asn41, 70 to 75, 104 to 108, 128 to 129, Lys141, Lys150, 150 to 151, and 168 to 171 each bind NAD(+); these read DGEQYK, GVIGD, TT, KN, and CLTT. Zn(2+)-binding residues include Glu183, His246, and His263.

Belongs to the sugar phosphate cyclases superfamily. Dehydroquinate synthase family. The cofactor is NAD(+). Requires Co(2+) as cofactor. Zn(2+) serves as cofactor.

The protein localises to the cytoplasm. It catalyses the reaction 7-phospho-2-dehydro-3-deoxy-D-arabino-heptonate = 3-dehydroquinate + phosphate. The protein operates within metabolic intermediate biosynthesis; chorismate biosynthesis; chorismate from D-erythrose 4-phosphate and phosphoenolpyruvate: step 2/7. Functionally, catalyzes the conversion of 3-deoxy-D-arabino-heptulosonate 7-phosphate (DAHP) to dehydroquinate (DHQ). The sequence is that of 3-dehydroquinate synthase from Vibrio cholerae serotype O1 (strain ATCC 39315 / El Tor Inaba N16961).